Here is a 744-residue protein sequence, read N- to C-terminus: Dolasta-1(15),8-diene synthase (744 aa).

The interval 1 to 344 is terpene cyclase; that stretch reads MASTMMNYQD…RRYNPAAPLP (344 aa). Mg(2+)-binding residues include Asp-108 and Asp-112. Substrate is bound by residues Asp-108, Asp-112, 198-201, 246-250, and 336-337; these read RHYD, SWDKE, and RY. The short motif at 108-112 is the DDXXD element; sequence DDLTD. The prenyltransferase stretch occupies residues 345 to 744; sequence RREDIGKVNG…LHLITFQLKV (400 aa). Residues 399–422 form a disordered region; it reads YTTMTPAETSSDDKKKKAKASHET. The segment covering 409 to 422 has biased composition (basic and acidic residues); that stretch reads SDDKKKKAKASHET. Residues Arg-459 and His-488 each coordinate isopentenyl diphosphate. Asp-495 and Asp-499 together coordinate Mg(2+). The DDXXD signature appears at 495–499; that stretch reads DDVQD. Dimethylallyl diphosphate is bound at residue Arg-504. Arg-505 contacts isopentenyl diphosphate. The dimethylallyl diphosphate site is built by Lys-581, Thr-582, and Gln-617.

It in the N-terminal section; belongs to the terpene synthase family. This sequence in the C-terminal section; belongs to the FPP/GGPP synthase family. Hexamer. Requires Mg(2+) as cofactor.

It catalyses the reaction isopentenyl diphosphate + (2E,6E)-farnesyl diphosphate = (2E,6E,10E)-geranylgeranyl diphosphate + diphosphate. The enzyme catalyses (2E,6E,10E)-geranylgeranyl diphosphate = (5R,12R,14S)-dolasta-1(15),8-diene + diphosphate. It carries out the reaction (2E,6E,10E)-geranylgeranyl diphosphate = delta-araneosene + diphosphate. Its function is as follows. Bifunctional terpene synthase involved in the biosynthesis of the diterpenes delta-araneosene and dolasta-1(15),8-diene. The C-terminal prenyltransferase domain of CgDS catalyzes formation of the universal precursor of diterpene, geranylgeranyl diphosphate (GGPP), whereas the N-terminal terpene cyclase domain catalyzes the cyclization of GGPP to the intermediate delta-araneosene that is further converted to dolasta-1(15),8-diene in a second cyclization event. In some cases the cyclization stops at the delta-araneosene stage. In Colletotrichum gloeosporioides (Anthracnose fungus), this protein is Dolasta-1(15),8-diene synthase.